We begin with the raw amino-acid sequence, 272 residues long: Phosphoglycolate phosphatase (272 aa).

The active-site Nucleophile is aspartate 19. Positions 19, 21, and 182 each coordinate Mg(2+).

This sequence belongs to the HAD-like hydrolase superfamily. CbbY/CbbZ/Gph/YieH family. Mg(2+) serves as cofactor.

The catalysed reaction is 2-phosphoglycolate + H2O = glycolate + phosphate. Its pathway is organic acid metabolism; glycolate biosynthesis; glycolate from 2-phosphoglycolate: step 1/1. Its function is as follows. Specifically catalyzes the dephosphorylation of 2-phosphoglycolate. Is involved in the dissimilation of the intracellular 2-phosphoglycolate formed during the DNA repair of 3'-phosphoglycolate ends, a major class of DNA lesions induced by oxidative stress. In Pseudomonas savastanoi pv. phaseolicola (strain 1448A / Race 6) (Pseudomonas syringae pv. phaseolicola (strain 1448A / Race 6)), this protein is Phosphoglycolate phosphatase.